We begin with the raw amino-acid sequence, 418 residues long: eIF5-mimic protein 2-B (418 aa).

The span at 1 to 15 (MSYQKQQKPTLTGQR) shows a compositional bias: polar residues. The tract at residues 1 to 29 (MSYQKQQKPTLTGQRFKTRKRDEKERFDP) is disordered. The W2 domain occupies 247 to 414 (NQQSLGARKE…KNAEEESESE (168 aa)).

This sequence belongs to the BZW family.

Its function is as follows. Translation initiation regulator which may repress repeat-associated non-AUG (RAN) initiated translation probably by acting as a competitive inhibitor of eukaryotic translation initiation factor 5 (EIF5) function. Enhances histone H4 gene transcription but does not seem to bind DNA directly. The sequence is that of eIF5-mimic protein 2-B (bzw1b) from Danio rerio (Zebrafish).